The sequence spans 390 residues: EF-hand calcium-binding domain-containing protein 4A (390 aa).

A compositionally biased stretch (low complexity) spans 1 to 27; it reads MSPRSTLRSPLPSRTARSSASSDTPSP. The tract at residues 1–37 is disordered; that stretch reads MSPRSTLRSPLPSRTARSSASSDTPSPGADRQDRMSK. 2 consecutive EF-hand domains span residues 33-66 and 67-102; these read DRMS…QELP and LSPE…LVGS. Positions 80, 82, 84, 86, and 91 each coordinate Ca(2+). A coiled-coil region spans residues 173–357; it reads SHLQDALKEK…DDKDAHQAQK (185 aa). The interval 206 to 234 is disordered; it reads DMESQLKEERERRQALDSMRQGDKKEQLL.

This sequence belongs to the EFCAB4 family.

The polypeptide is EF-hand calcium-binding domain-containing protein 4A (cracr2b) (Danio rerio (Zebrafish)).